A 123-amino-acid chain; its full sequence is Large ribosomal subunit protein uL14 (123 aa).

The protein belongs to the universal ribosomal protein uL14 family. In terms of assembly, part of the 50S ribosomal subunit. Forms a cluster with proteins L3 and L19. In the 70S ribosome, L14 and L19 interact and together make contacts with the 16S rRNA in bridges B5 and B8.

Its function is as follows. Binds to 23S rRNA. Forms part of two intersubunit bridges in the 70S ribosome. The sequence is that of Large ribosomal subunit protein uL14 from Photorhabdus laumondii subsp. laumondii (strain DSM 15139 / CIP 105565 / TT01) (Photorhabdus luminescens subsp. laumondii).